A 468-amino-acid chain; its full sequence is Ubiquitin carboxyl-terminal hydrolase MINDY-1 (468 aa).

Residues 1-19 (MEQPQTENPAPSKATSAET) are compositionally biased toward polar residues. The interval 1-105 (MEQPQTENPA…RPQELPQSPR (105 aa)) is disordered. The span at 22-41 (SENHEALSGPEKHPQDKDGA) shows a compositional bias: basic and acidic residues. The segment covering 43–54 (ADGAAGEQEPGD) has biased composition (low complexity). The span at 68–80 (CPPPEASSSPPGP) shows a compositional bias: pro residues. A Phosphoserine modification is found at serine 103. The active-site Nucleophile is cysteine 137. Histidine 319 acts as the Proton acceptor in catalysis. A ubiquitin-binding domain (UBD) region spans residues 388–427 (QVDQDYLIALSLQQQQQPQGTLGLSDLELAQQLQQEEYQQ). Positions 423–432 (EEYQQQQAVQ) are enriched in low complexity. The segment at 423–468 (EEYQQQQAVQPVRTRAPSPQGRGATSGRPAGERRQRSKTESDCVLL) is disordered. The residue at position 440 (serine 440) is a Phosphoserine. Positions 452-468 (AGERRQRSKTESDCVLL) are enriched in basic and acidic residues.

The protein belongs to the MINDY deubiquitinase family. FAM63 subfamily.

The catalysed reaction is Thiol-dependent hydrolysis of ester, thioester, amide, peptide and isopeptide bonds formed by the C-terminal Gly of ubiquitin (a 76-residue protein attached to proteins as an intracellular targeting signal).. Its function is as follows. Hydrolase that can specifically remove 'Lys-48'-linked conjugated ubiquitin from proteins. Has exodeubiquitinase activity and has a preference for long polyubiquitin chains. May play a regulatory role at the level of protein turnover. In Mus musculus (Mouse), this protein is Ubiquitin carboxyl-terminal hydrolase MINDY-1 (Mindy1).